Here is a 556-residue protein sequence, read N- to C-terminus: MTKPTKYRDVEIRAAHGNKLTAKSWLTEAPLRMLMNNLDPQVAENPKELVVYGGIGRAARNWECYDQIVESLTHLNDDETLLVQSGKPVGVFKTHSNAPRVLIANSNLVPHWASWEHFNELDAKGLAMYGQMTAGSWIYIGSQGIVQGTYETFVEAGRQHYDSNLKGRWVLTAGLGGMGGAQPLAATLAGACSLNIECQQVSIDFRLNSRYVDEQATDLDDALARIAKYTQEGKAISIALLGNAAEILPELVKRGVRPDMVTDQTSAHDPLNGYLPAGWTWDEYRARAKTEPAAVIKAAKQSMAVHVKAMLAFQKQGIPTFDYGNNIRQMAQEEGVENAFDFPGFVPAYIRPLFCRGVGPFRWAALSGDPQDIYKTDAKVKELIPDDAHLHNWLDMARERISFQGLPARICWVGLGQRAKLGLAFNEMVRSGELSAPVVIGRDHLDSGSVASPNRETEAMQDGSDAVSDWPLLNALLNTASGATWVSLHHGGGVGMGFSQHSGMVIVCDGTDEAAERIARVLHNDPATGVMRHADAGYQIAIDCAKEQGLNLPMIK.

NAD(+) is bound by residues 53–54 (GG), glutamine 131, 177–179 (GMG), glutamate 197, 243–244 (NA), 264–268 (QTSAH), 274–275 (YL), and tyrosine 323. The active site involves cysteine 411. Glycine 493 contributes to the NAD(+) binding site.

This sequence belongs to the urocanase family. NAD(+) serves as cofactor.

It is found in the cytoplasm. It carries out the reaction 4-imidazolone-5-propanoate = trans-urocanate + H2O. It functions in the pathway amino-acid degradation; L-histidine degradation into L-glutamate; N-formimidoyl-L-glutamate from L-histidine: step 2/3. In terms of biological role, catalyzes the conversion of urocanate to 4-imidazolone-5-propionate. This chain is Urocanate hydratase, found in Pseudomonas fluorescens (strain SBW25).